The sequence spans 208 residues: Large ribosomal subunit protein bL25 (208 aa).

The segment at Met-1–Arg-21 is disordered.

This sequence belongs to the bacterial ribosomal protein bL25 family. CTC subfamily. As to quaternary structure, part of the 50S ribosomal subunit; part of the 5S rRNA/L5/L18/L25 subcomplex. Contacts the 5S rRNA. Binds to the 5S rRNA independently of L5 and L18.

Its function is as follows. This is one of the proteins that binds to the 5S RNA in the ribosome where it forms part of the central protuberance. This Hahella chejuensis (strain KCTC 2396) protein is Large ribosomal subunit protein bL25.